Consider the following 478-residue polypeptide: H(+)/Cl(-) exchange transporter ClcA (478 aa).

Topologically, residues 1-32 (MTHSTQQLSPEGVAEGKRGRLIRELVNRDKTP) are cytoplasmic. Residues 33–69 (LIILIMAAVVGVVTGLLGVAFDRGVDWVQQQRLLALA) traverse the membrane as a helical segment. The Periplasmic segment spans residues 70–76 (NVADYAL). A helical membrane pass occupies residues 77-100 (LVWPLAFIMSALLAMMGYFLVSRF). Positions 106–110 (GSGIP) match the Selectivity filter part_1 motif. Ser-107 serves as a coordination point for chloride. The helical intramembrane region spans 109-116 (IPEIEGAM). Topologically, residues 117–123 (EEMRPVR) are cytoplasmic. 2 helical membrane passes run 124-141 (WWRV…TLGA) and 148-166 (EGPM…VDIF). A Selectivity filter part_2 motif is present at residues 146–150 (GREGP). The Cytoplasmic segment spans residues 167–176 (RLRSPEARHS). Intramembrane regions (helical) lie at residues 177-189 (LLAT…LSAA) and 193-201 (PLAGILFVI). At 202–214 (EEMRSQFRYSLVS) the chain is on the cytoplasmic side. The helical transmembrane segment at 215 to 232 (IKAVFIGVITSTIVYRYF) threads the bilayer. Over 233-252 (NGERAIIEVGKLSDAPLNTL) the chain is Periplasmic. Residues 253–281 (WLYLLLGIIFGAVGVIFNALIFRTQDMFV) traverse the membrane as a helical segment. The Cytoplasmic segment spans residues 282-287 (RFHGGD). The helical transmembrane segment at 288–309 (WRKLVLIGGLLGGMCGLLALLH) threads the bilayer. Residues 310 to 329 (GNAVGGGFALIPIAAAGNFS) lie on the Periplasmic side of the membrane. Transmembrane regions (helical) follow at residues 330-349 (IGML…LCFG) and 355-376 (GIFA…LSCA). The Selectivity filter part_3 signature appears at 355-359 (GIFAP). Residues Ile-356 and Phe-357 each coordinate chloride. At 377–386 (HFFPQYGIEA) the chain is on the periplasmic side. Residues 387–401 (GTFAIAGMGALFAAS) constitute an intramembrane region (helical). The segment at residues 402–404 (VRA) is an intramembrane region (note=Loop between two helices). Residues 405 to 416 (PLTGIVLVLEMT) constitute an intramembrane region (helical). Positions 417–421 (DNYQL) form an intramembrane region, note=Loop between two helices. The helical transmembrane segment at 422–438 (ILPMIVTCLGATLIAQF) threads the bilayer. Over 439 to 478 (MGGKPLYSAILARTLAKQEQARATVIAQEPAVENTPQIGK) the chain is Cytoplasmic. Tyr-445 provides a ligand contact to chloride.

This sequence belongs to the chloride channel (TC 2.A.49) family. ClcA subfamily. Homodimer.

It is found in the cell inner membrane. The enzyme catalyses 2 chloride(in) + H(+)(out) = 2 chloride(out) + H(+)(in). Its function is as follows. Proton-coupled chloride transporter. Functions as antiport system and exchanges two chloride ions for 1 proton. Probably acts as an electrical shunt for an outwardly-directed proton pump that is linked to amino acid decarboxylation, as part of the extreme acid resistance (XAR) response. The polypeptide is H(+)/Cl(-) exchange transporter ClcA (Yersinia pestis bv. Antiqua (strain Antiqua)).